Here is a 490-residue protein sequence, read N- to C-terminus: Subtilisin-like protease 8 (490 aa).

An N-terminal signal peptide occupies residues 1 to 26 (MKGLLSLSVLPVLAYASPMIVDSIHQ). Positions 27-134 (NAAPILSSTN…YIERDSEVHT (108 aa)) are excised as a propeptide. Residues 43 to 134 (SYIVVFKKGV…YIERDSEVHT (92 aa)) form the Inhibitor I9 domain. Positions 144-450 (PWGLARISHR…GGSDDYKKII (307 aa)) constitute a Peptidase S8 domain. Catalysis depends on charge relay system residues aspartate 180 and histidine 212. Asparagine 282 carries an N-linked (GlcNAc...) asparagine glycan. The Charge relay system role is filled by serine 378. Residue asparagine 456 is glycosylated (N-linked (GlcNAc...) asparagine).

This sequence belongs to the peptidase S8 family.

Its subcellular location is the secreted. Secreted subtilisin-like serine protease with keratinolytic activity that contributes to pathogenicity. This Trichophyton verrucosum (strain HKI 0517) protein is Subtilisin-like protease 8 (SUB8).